A 511-amino-acid polypeptide reads, in one-letter code: Exodeoxyribonuclease 7 large subunit (511 aa).

Belongs to the XseA family. Heterooligomer composed of large and small subunits.

Its subcellular location is the cytoplasm. It catalyses the reaction Exonucleolytic cleavage in either 5'- to 3'- or 3'- to 5'-direction to yield nucleoside 5'-phosphates.. Functionally, bidirectionally degrades single-stranded DNA into large acid-insoluble oligonucleotides, which are then degraded further into small acid-soluble oligonucleotides. The sequence is that of Exodeoxyribonuclease 7 large subunit from Brucella melitensis biotype 2 (strain ATCC 23457).